Here is a 367-residue protein sequence, read N- to C-terminus: Glutamate 5-kinase (367 aa).

Residue Lys-10 coordinates ATP. Ser-50, Asp-137, and Asn-149 together coordinate substrate. Residues 169 to 170 and 211 to 217 contribute to the ATP site; these read TD and TGGMGTK. The PUA domain maps to 275 to 353; the sequence is AGEITVDDGA…QEISEILGYE (79 aa).

This sequence belongs to the glutamate 5-kinase family.

It is found in the cytoplasm. The catalysed reaction is L-glutamate + ATP = L-glutamyl 5-phosphate + ADP. Its pathway is amino-acid biosynthesis; L-proline biosynthesis; L-glutamate 5-semialdehyde from L-glutamate: step 1/2. Proline-mediated feedback inhibition. In terms of biological role, catalyzes the transfer of a phosphate group to glutamate to form L-glutamate 5-phosphate. The sequence is that of Glutamate 5-kinase from Serratia marcescens.